The chain runs to 688 residues: MAQENLLIELGTEELPPKSLRQLAESFASNVEAELNKAELSFDSVRWLASPRRLALVIANLSDSQADKIVEKRGPAVNVAFDAEGQATKAAQGWARSNGITVEQAERLITDKGEWLLFKSEVKGLSVAELIPEIAANALAKLPISKPMRWGSSSTQFIRPVHTVTMLFGSRLIQGELLGVASDRIIRGHRFLGEAELIIDHADQYETLLDDSGKVIVDYERRKAIIRDQVEALAAHENGVADIDESLLEEVTSLVEWPVTLVGSFEDKFLDVPSEALIYTMKDNQKYFPVLDKDGKLLPRFIFVSNIVSRDPAQVISGNEKVIRPRLADAEFFFETDKKKTLASRLESLSSVLFQQKLGTLKEKSERIANVAEDIALQIKADTKHAQRAGLLSKTDLMTDMVMEFPDVQGIMGMHYALHDGEEQEVAIALNEQYLPRFAGDKLPTSLVACAVSLADKLDTLVGIFGIGQAPKGAADPFALRRAAIGLLRIITNKNLDLDLVELVEIAKLQYGHKLTNDNVVQDVVDFLFARFRATYQANGYSVELIQSVLVRRPTKPVDFEKRLQAVAKFQTLPEAAPIAAANKRISNILAKVKGEINAQVDPSLLQEPAEIKLSEILGSLESTLRPLFDNLDYESALFELASLNEPVDEFFDNVMVMAEDPAIKANRLAILNRLRNLFLQIADVSVL.

It belongs to the class-II aminoacyl-tRNA synthetase family. In terms of assembly, tetramer of two alpha and two beta subunits.

It is found in the cytoplasm. The enzyme catalyses tRNA(Gly) + glycine + ATP = glycyl-tRNA(Gly) + AMP + diphosphate. This Psychromonas ingrahamii (strain DSM 17664 / CCUG 51855 / 37) protein is Glycine--tRNA ligase beta subunit.